A 222-amino-acid polypeptide reads, in one-letter code: Ribonuclease 3 (222 aa).

The signal sequence occupies residues 1 to 19; the sequence is MKFFIFILALQQLYVQSFA. Gln-30 contacts RNA. Cysteines 36 and 42 form a disulfide. RNA contacts are provided by residues His-57, Phe-107, 110–111, and 114–115; these read HE and KH. Residue His-57 is the Proton donor of the active site. Disulfide bonds link Cys-72–Cys-118, Cys-178–Cys-213, and Cys-194–Cys-205. Glu-111 is an active-site residue. His-115 serves as the catalytic Proton acceptor.

This sequence belongs to the RNase T2 family.

The enzyme catalyses a ribonucleotidyl-ribonucleotide-RNA + H2O = a 3'-end 3'-phospho-ribonucleotide-RNA + a 5'-end dephospho-ribonucleoside-RNA + H(+). Its function is as follows. May remobilize phosphate, particularly when cells senesce or when phosphate becomes limiting. This chain is Ribonuclease 3 (RNS3), found in Arabidopsis thaliana (Mouse-ear cress).